A 474-amino-acid chain; its full sequence is Bifunctional protein HldE (474 aa).

Residues 1-317 (MKLSMPRFDQ…RRAIQRSEGS (317 aa)) form a ribokinase region. 194–197 (NLSE) contacts ATP. Asp263 is an active-site residue. The interval 343–474 (FTNGCFDILH…AIVEKIRNNE (132 aa)) is cytidylyltransferase.

The protein in the N-terminal section; belongs to the carbohydrate kinase PfkB family. In the C-terminal section; belongs to the cytidylyltransferase family. As to quaternary structure, homodimer.

It catalyses the reaction D-glycero-beta-D-manno-heptose 7-phosphate + ATP = D-glycero-beta-D-manno-heptose 1,7-bisphosphate + ADP + H(+). The enzyme catalyses D-glycero-beta-D-manno-heptose 1-phosphate + ATP + H(+) = ADP-D-glycero-beta-D-manno-heptose + diphosphate. It participates in nucleotide-sugar biosynthesis; ADP-L-glycero-beta-D-manno-heptose biosynthesis; ADP-L-glycero-beta-D-manno-heptose from D-glycero-beta-D-manno-heptose 7-phosphate: step 1/4. The protein operates within nucleotide-sugar biosynthesis; ADP-L-glycero-beta-D-manno-heptose biosynthesis; ADP-L-glycero-beta-D-manno-heptose from D-glycero-beta-D-manno-heptose 7-phosphate: step 3/4. In terms of biological role, catalyzes the phosphorylation of D-glycero-D-manno-heptose 7-phosphate at the C-1 position to selectively form D-glycero-beta-D-manno-heptose-1,7-bisphosphate. Its function is as follows. Catalyzes the ADP transfer from ATP to D-glycero-beta-D-manno-heptose 1-phosphate, yielding ADP-D-glycero-beta-D-manno-heptose. The polypeptide is Bifunctional protein HldE (Pseudomonas fluorescens (strain SBW25)).